Consider the following 304-residue polypeptide: E3 ubiquitin-protein ligase CHIP (304 aa).

The span at 1-10 shows a compositional bias: basic and acidic residues; the sequence is MKGKEEKEGG. Positions 1–30 are disordered; sequence MKGKEEKEGGARLGTGGGGSPDKSPSAQEL. K2 is covalently cross-linked (Glycyl lysine isopeptide (Lys-Gly) (interchain with G-Cter in ubiquitin)). Positions 11–20 are enriched in gly residues; sequence ARLGTGGGGS. Phosphoserine is present on S20. Residue K23 forms a Glycyl lysine isopeptide (Lys-Gly) (interchain with G-Cter in ubiquitin) linkage. S24 and S26 each carry phosphoserine. TPR repeat units lie at residues 27–60, 61–94, and 96–128; these read AQELKEQGNRLFVGRKYPEAAACYGRAITRNPLV, AVYYTNRALCYLKMQQPEQALADCRRALELDGQS, and KAHFFLGQCQLEMESYDEAIANLQRAYSLAKEQ. Residues 102-201 are required for interaction with MAPK7; it reads GQCQLEMESY…GHIRAQQACI (100 aa). The interval 143-197 is required for interaction with and ubiquitination of MYOCD; it reads AKKKRWNSIEERRIHQESELHSYLTRLIAAERERELEECQRNHEGDEDDGHIRAQ. Residues 144–198 form a required for interaction with FOXO1 region; that stretch reads KKKRWNSIEERRIHQESELHSYLTRLIAAERERELEECQRNHEGDEDDGHIRAQQ. The tract at residues 144–304 is required for ubiquitination of FOXO1; it reads KKKRWNSIEE…ISENGWVEDY (161 aa). S150 carries the phosphoserine modification. Glycyl lysine isopeptide (Lys-Gly) (interchain with G-Cter in ubiquitin) cross-links involve residues K222 and K256. The region spanning 227 to 301 is the U-box domain; it reads DIPDYLCGKI…DAFISENGWV (75 aa). Phosphoserine is present on S274.

In terms of assembly, homodimer. Interacts with BAG2, and with the E2 ubiquitin conjugating enzymes UBE2D1, UBE2D2 and UBE2D3. Detected in a ternary complex containing STUB1, HSPA1A and HSPBP1. Part of a complex composed of STUB1/CHIP, VCP/p97, CHRNA3, and UBXN2A that modulates the ubiquitination and endoplasmic reticulum-associated degradation (ERAD) of CHRNA3. Within the complex UBXN2A acts as a scaffold protein required for the interaction of CHRNA3 with VCP/p97, this interaction also inhibits CHRNA3 ubiquitination by STUB1/CHIP and subsequently ERAD. Interacts with MKKS. Interacts with DNAAF4. Interacts (via the U-box domain) with the UBE2V2-UBE2N heterodimer; the complex has a specific 'Lys-63'-linked polyubiquitination activity. Interacts (when monoubiquitinated) with ATXN3. Interacts with UBE2W. Interacts with DNAJB6. Interacts with FLCN and HSP90AA1. Interacts with HSP90. Interacts with UBE2N and UBE2V1. Interacts (via TPR repeats) with HSPA8 (via C-terminus). Interacts (via TPR repeats) with HSPA1A (via C-terminus). Interacts with the non-acetylated form of HSPA1A and HSPA1B. Interacts with SMAD3 and HSP90AB1. Interacts with UBE4B. Interacts with PRMT5. Interacts with MYOCD (via C-terminus). Interacts with FOXO1 (when phosphorylated on 'Ser-250'). Interacts with MAPK7/ERK5; the interaction is enhanced in the presence of IGF1 or MAP2K5 and promotes STUB1/CHIP E3 ligase activity. Interacts with and ubiquitinates ESR1; the interaction is promoted in the absence of estradiol (17-beta-estradiol/E2). Interacts with ESR2. Interacts with and ubiquitinates NFATC3; HSPA1A/HSP70 is required as a co-chaperone. In macrophages, interacts with PAQR3; the interaction promotes PPARG poylubiquitination and STUB1-mediated degradation. Component of the chaperone-assisted selective autophagy (CASA) complex consisting of BAG3, HSPA8/HSC70, HSPB8 and STUB1/CHIP. In terms of processing, auto-ubiquitinated; mediated by UBE2D1 and UBE2D2 and enhanced in the presence of MAP2K5. Monoubiquitinated at Lys-2 following cell stress by UBE2W, promoting the interaction with ATXN3. Expressed in the adventitia layer of the carotid artery (at protein level). Expressed in the CA1 region of the hippocampus (at protein level). Expressed in the uterus (at protein level).

Its subcellular location is the cytoplasm. The protein localises to the nucleus. The protein resides in the mitochondrion. The enzyme catalyses S-ubiquitinyl-[E2 ubiquitin-conjugating enzyme]-L-cysteine + [acceptor protein]-L-lysine = [E2 ubiquitin-conjugating enzyme]-L-cysteine + N(6)-ubiquitinyl-[acceptor protein]-L-lysine.. The protein operates within protein modification; protein ubiquitination. E3 ubiquitin-protein ligase which targets misfolded chaperone substrates towards proteasomal degradation. Plays a role in the maintenance of mitochondrial morphology and promotes mitophagic removal of dysfunctional mitochondria; thereby acts as a protector against apoptosis in response to cellular stress. Negatively regulates vascular smooth muscle contraction, via degradation of the transcriptional activator MYOCD and subsequent loss of transcription of genes involved in vascular smooth muscle contraction. Promotes survival and proliferation of cardiac smooth muscle cells via ubiquitination and degradation of FOXO1, resulting in subsequent repression of FOXO1-mediated transcription of pro-apoptotic genes. Ubiquitinates ICER-type isoforms of CREM and targets them for proteasomal degradation, thereby acts as a positive effector of MAPK/ERK-mediated inhibition of apoptosis in cardiomyocytes. Inhibits lipopolysaccharide-induced apoptosis and hypertrophy in cardiomyocytes, via ubiquitination and subsequent proteasomal degradation of NFATC3. Collaborates with ATXN3 in the degradation of misfolded chaperone substrates: ATXN3 restricting the length of ubiquitin chain attached to STUB1/CHIP substrates and preventing further chain extension. Ubiquitinates NOS1 in concert with Hsp70 and Hsp40. Modulates the activity of several chaperone complexes, including Hsp70, Hsc70 and Hsp90. Ubiquitinates CHRNA3 targeting it for endoplasmic reticulum-associated degradation in cortical neurons, as part of the STUB1-VCP-UBXN2A complex. Ubiquitinates and promotes ESR1 proteasomal degradation in response to age-related circulating estradiol (17-beta-estradiol/E2) decline, thereby promotes neuronal apoptosis in response to ischemic reperfusion injury. Mediates transfer of non-canonical short ubiquitin chains to HSPA8 that have no effect on HSPA8 degradation. Mediates polyubiquitination of DNA polymerase beta (POLB) at 'Lys-41', 'Lys-61' and 'Lys-81', thereby playing a role in base-excision repair: catalyzes polyubiquitination by amplifying the HUWE1/ARF-BP1-dependent monoubiquitination and leading to POLB-degradation by the proteasome. Mediates polyubiquitination of CYP3A4. Ubiquitinates EPHA2 and may regulate the receptor stability and activity through proteasomal degradation. Acts as a co-chaperone for HSPA1A and HSPA1B chaperone proteins and promotes ubiquitin-mediated protein degradation. Negatively regulates the suppressive function of regulatory T-cells (Treg) during inflammation by mediating the ubiquitination and degradation of FOXP3 in a HSPA1A/B-dependent manner. Catalyzes monoubiquitination of SIRT6, preventing its degradation by the proteasome. Likely mediates polyubiquitination and down-regulates plasma membrane expression of PD-L1/CD274, an immune inhibitory ligand critical for immune tolerance to self and antitumor immunity. Negatively regulates TGF-beta signaling by modulating the basal level of SMAD3 via ubiquitin-mediated degradation. Plays a role in the degradation of TP53. Mediates ubiquitination of RIPK3 leading to its subsequent proteasome-dependent degradation. May regulate myosin assembly in striated muscles together with UBE4B and VCP/p97 by targeting myosin chaperone UNC45B for proteasomal degradation. Ubiquitinates PPARG in macrophages playing a role in M2 macrophages polarization and angiogenesis. This chain is E3 ubiquitin-protein ligase CHIP, found in Rattus norvegicus (Rat).